Reading from the N-terminus, the 335-residue chain is Teichoic acids export ATP-binding protein TagH (335 aa).

Residues 26–246 (IKGLFMPKSQ…YDEFVKWFNK (221 aa)) form the ABC transporter domain. Residue 60-67 (GINGSGKS) participates in ATP binding.

It belongs to the ABC transporter superfamily. Teichoic acids exporter (TC 3.A.1.104.1) family. The complex is composed of two ATP-binding proteins (TagH) and two transmembrane proteins (TagG).

It localises to the cell membrane. It carries out the reaction ATP + H2O + teichoic acidSide 1 = ADP + phosphate + teichoic acidSide 2.. Its function is as follows. Part of the ABC transporter complex TagGH involved in teichoic acids export. Responsible for energy coupling to the transport system. This Listeria monocytogenes serotype 4b (strain F2365) protein is Teichoic acids export ATP-binding protein TagH.